A 198-amino-acid polypeptide reads, in one-letter code: Suppressor of cytokine signaling 2 (198 aa).

The disordered stretch occupies residues 1–29; the sequence is MTLRCLEPSGNGADRTRSQWGTAGLPEEQ. The interaction with AREL1 stretch occupies residues 1 to 75; sequence MTLRCLEPSG…PEGTFLIRDS (75 aa). Position 30 is a phosphoserine (Ser30). Residues 48–156 enclose the SH2 domain; the sequence is WYWGSMTVNE…TVHLYLTKPL (109 aa). Phosphoserine; by PKC is present on Ser52. In terms of domain architecture, SOCS box spans 151-197; it reads YLTKPLYTSAPTLQHFCRLAINKCTGTIWGLPLPTRLKDYLEEYKFQ. A Glycyl lysine isopeptide (Lys-Gly) (interchain with G-Cter in ubiquitin) cross-link involves residue Lys173.

Substrate-recognition component of the ECS(SOCS2) complex, composed of SOCS2, CUL5, ELOB, ELOC and RNF7/RBX2. Interacts with IGF1R. Interacts with DCUN1D1. In terms of processing, ubiquitinated; mediated by AREL1 and leading to its subsequent proteasomal degradation. Ubiquitination is dependent on phosphorylation at Ser-52, by PKC and is stimulated by LPS. Phosphorylation at Ser-52 by PKC facilitates its ubiquitination and proteasomal degradation. As to expression, expressed primarily in the testis, some expression in liver and lung.

Its subcellular location is the cytoplasm. Its pathway is protein modification; protein ubiquitination. Functionally, substrate-recognition component of a cullin-5-RING E3 ubiquitin-protein ligase complex (ECS complex, also named CRL5 complex), which mediates the ubiquitination and subsequent proteasomal degradation of target proteins, such as EPOR and GHR. Specifically recognizes and binds phosphorylated proteins via its SH2 domain, promoting their ubiquitination. The ECS(SOCS2) complex acts as a key regulator of growth hormone receptor (GHR) levels by mediating ubiquitination and degradation of GHR, following GHR phosphorylation by JAK2. The ECS(SOCS2) also catalyzes ubiquitination and degradation of JAK2-phosphorylated EPOR. This is Suppressor of cytokine signaling 2 from Mus musculus (Mouse).